We begin with the raw amino-acid sequence, 219 residues long: Flagellin A (219 aa).

Residues 1 to 12 constitute a propeptide that is removed on maturation; that stretch reads MKVKEFMNNKKG. N-linked (GlcNAc...) asparagine glycans are attached at residues N38 and N175.

This sequence belongs to the archaeal flagellin family. Post-translationally, N-linked glycans consist of the 779 Da trisaccharide beta-ManNAc(Thr)-(1-4)-beta-GlcNAc3NAcA-(1-3)-beta-GlcNAc.

It is found in the archaeal flagellum. In terms of biological role, flagellin is the subunit protein which polymerizes to form the filaments of archaeal flagella. The chain is Flagellin A (flaA) from Methanococcus voltae.